The following is a 622-amino-acid chain: Galactolipid galactosyltransferase SFR2, chloroplastic (622 aa).

The Stromal portion of the chain corresponds to 1–3; the sequence is MEL. The helical; Signal-anchor transmembrane segment at 4 to 24 threads the bilayer; sequence FALLIKVAGLLATVTVGANVV. Residues 25–622 are Cytoplasmic-facing; that stretch reads SYSRFRRQNL…LHPALASPFD (598 aa). Residues His222, 266 to 267, Tyr377, Glu429, Trp467, 474 to 475, and Phe483 contribute to the a beta-D-glucoside site; these read NE and EW. Catalysis depends on Glu267, which acts as the Proton donor. The active-site Nucleophile is the Glu429.

This sequence belongs to the glycosyl hydrolase 1 family. As to expression, expressed in hypocotyls, cotyledons, stems, leaves, pedicels, sepals, anthers and pistils. Limited expression in roots. Not detected in petals or filaments.

It is found in the plastid. It localises to the chloroplast. The protein localises to the chloroplast outer membrane. The enzyme catalyses 2 a 1,2-diacyl-3-O-(beta-D-galactosyl)-sn-glycerol = a 1,2-diacyl-3-O-[beta-D-galactosyl-(1-&gt;6)-beta-D-galactosyl]-sn-glycerol + a 1,2-diacyl-sn-glycerol. Its activity is regulated as follows. Induced by MgCl(2). Its function is as follows. Glycosyl hydrolase family protein acting primarily as a highly specific galactosyltransferase. Synthesizes digalactosyldiacylglycerol from monogalactosyldiacylglycerol in the absence of UDP-galactose in vitro. Hydrolyzes o- and p-nitrophenyl beta-D-glucoside in vitro. Plays a role in freezing tolerance. May play a role in chloroplast protection. The polypeptide is Galactolipid galactosyltransferase SFR2, chloroplastic (Arabidopsis thaliana (Mouse-ear cress)).